Reading from the N-terminus, the 510-residue chain is NAD(P)H-quinone oxidoreductase subunit 2, chloroplastic (510 aa).

The next 12 helical transmembrane spans lie at 24-44 (LLLFHGSFIFPECILIFGLIL), 59-79 (WFYFISSTSLVMSITALFFRW), 99-119 (IFQFLILLCSTLCIPLSVEYI), 124-144 (MAITEFLLFVLTATLGGMFLC), 149-169 (LITIFVAPECFSLCSYLLSGY), 184-204 (LLMGGASSSILVHGLSWLYGL), 229-249 (ISIALISITVGIGFKLSPAPF), 295-315 (WHLLLEILAILSMILGNLIAL), 323-343 (MLAYSSIGQIGYVIIGIIVGD), 354-374 (YMLFYISMNLGTFACIVSFGL), 395-415 (ALSSALCLLSLGGLPPLAGFF), and 418-438 (LYLFWCGWQAGLYFLVSIGLL).

It belongs to the complex I subunit 2 family. In terms of assembly, NDH is composed of at least 16 different subunits, 5 of which are encoded in the nucleus.

It localises to the plastid. It is found in the chloroplast thylakoid membrane. It catalyses the reaction a plastoquinone + NADH + (n+1) H(+)(in) = a plastoquinol + NAD(+) + n H(+)(out). It carries out the reaction a plastoquinone + NADPH + (n+1) H(+)(in) = a plastoquinol + NADP(+) + n H(+)(out). In terms of biological role, NDH shuttles electrons from NAD(P)H:plastoquinone, via FMN and iron-sulfur (Fe-S) centers, to quinones in the photosynthetic chain and possibly in a chloroplast respiratory chain. The immediate electron acceptor for the enzyme in this species is believed to be plastoquinone. Couples the redox reaction to proton translocation, and thus conserves the redox energy in a proton gradient. This Coelogyne cristata (Orchid) protein is NAD(P)H-quinone oxidoreductase subunit 2, chloroplastic.